A 186-amino-acid polypeptide reads, in one-letter code: MRRIGVIALQGDVSEHISAIEAAGGQAVPVRRAGIIPTCSGIVIPGGESTTISRQLERTGIAAEIKQAAANGTPVLATCAGLVLAAKEIDAGDVKPLGLIDISVGRNAFGPQRESFEAEINVEGFDRPYRAVFIRAPVVLRCGEGVEKLARFGGRTVAVRQGNVIGLAFHPELTGDLRFHKMLLEA.

Residue 47–49 (GES) coordinates L-glutamine. The active-site Nucleophile is the Cys79. L-glutamine contacts are provided by residues Arg106 and 134–135 (IR). Residues His170 and Glu172 each act as charge relay system in the active site.

The protein belongs to the glutaminase PdxT/SNO family. In the presence of PdxS, forms a dodecamer of heterodimers. Only shows activity in the heterodimer.

It carries out the reaction aldehydo-D-ribose 5-phosphate + D-glyceraldehyde 3-phosphate + L-glutamine = pyridoxal 5'-phosphate + L-glutamate + phosphate + 3 H2O + H(+). It catalyses the reaction L-glutamine + H2O = L-glutamate + NH4(+). The protein operates within cofactor biosynthesis; pyridoxal 5'-phosphate biosynthesis. Its function is as follows. Catalyzes the hydrolysis of glutamine to glutamate and ammonia as part of the biosynthesis of pyridoxal 5'-phosphate. The resulting ammonia molecule is channeled to the active site of PdxS. In Methanothrix thermoacetophila (strain DSM 6194 / JCM 14653 / NBRC 101360 / PT) (Methanosaeta thermophila), this protein is Pyridoxal 5'-phosphate synthase subunit PdxT.